Here is a 152-residue protein sequence, read N- to C-terminus: Probable prefoldin subunit 5 (152 aa).

This sequence belongs to the prefoldin subunit alpha family. Heterohexamer of two PFD-alpha type and four PFD-beta type subunits.

Binds specifically to cytosolic chaperonin (c-CPN) and transfers target proteins to it. Binds to nascent polypeptide chain and promotes folding in an environment in which there are many competing pathways for nonnative proteins. This Caenorhabditis elegans protein is Probable prefoldin subunit 5 (pfd-5).